A 492-amino-acid polypeptide reads, in one-letter code: MAAGPIRVVLVLLGVLSVCAASGHGSVAEREAGGEAEWAEPWDGAVFRPPSALGAVGVTRSSGTPRPGREEAGDLPVLLWWSPGLFPHFPGDSERIECARGACVASRNRRALRDSRTRALLFYGTDFRASAAPLPRLAHQSWALLHEESPLNNFLLSHGPGIRLFNLTSTFSRHSDYPLSLQWLPGTAYLRRPVPPPMERAEWRRRGYAPLLYLQSHCDVPADRDRYVRELMRHIPVDSYGKCLQNRELPTARLQDTATATTEDPELLAFLSRYKFHLALENAICNDYMTEKLWRPMHLGAVPVYRGSPSVRDWMPNNHSVILIDDFESPQKLAEFIDFLDKNDEEYMKYLAYKQPGGITNQFLLDSLKHREWGVNDPLLPNYLNGFECFVCDYELARLDAEKAHAASPGDSPVFEPHIAQPSHMDCPVPTPGFGNVEEIPENDSWKEMWLQDYWQGLDQGEALTAMIHNNETEQTKFWDYLHEIFMKRQHL.

The Cytoplasmic portion of the chain corresponds to 1–7 (MAAGPIR). A helical; Signal-anchor for type II membrane protein transmembrane segment spans residues 8–24 (VVLVLLGVLSVCAASGH). Residues 25 to 492 (GSVAEREAGG…HEIFMKRQHL (468 aa)) are Lumenal-facing. An N-linked (GlcNAc...) asparagine glycan is attached at Asn166. Residues Cys389 and Cys392 are joined by a disulfide bond. An N-linked (GlcNAc...) asparagine glycan is attached at Asn443.

This sequence belongs to the glycosyltransferase 10 family.

The protein resides in the endoplasmic reticulum membrane. The catalysed reaction is L-threonyl-[protein] + GDP-beta-L-fucose = 3-O-(alpha-L-fucosyl)-L-threonyl-[protein] + GDP + H(+). The enzyme catalyses L-seryl-[protein] + GDP-beta-L-fucose = 3-O-(alpha-L-fucosyl)-L-seryl-[protein] + GDP + H(+). It participates in protein modification; protein glycosylation. Functionally, protein O-fucosyltransferase that specifically catalyzes O-fucosylation of serine or threonine residues in EMI domains of target proteins, such as MMRN1, MMRN2 and EMID1. Attaches fucose through an O-glycosidic linkage. O-fucosylation of EMI domain-containing proteins may be required for facilitating protein folding and secretion. Also shows minor alpha-(1,3)-fucosyltransferase activity toward activity toward biantennary N-glycan acceptors. However, this was tested with a library of synthetic substrates and this activity is unsure in vivo. The protein is GDP-fucose protein O-fucosyltransferase 4 of Homo sapiens (Human).